The chain runs to 977 residues: Pro-apoptotic serine protease NMA111 (977 aa).

The disordered stretch occupies residues 1–36 (MTIQAHKRTLSEVSTSSVGQLKRREGYTEDYTDEGS). The segment at 64-254 (VVSVHFAQVA…LPLDRILRAL (191 aa)) is serine protease. Residues H102, D133, and S216 each act as charge relay system in the active site. PDZ domains are found at residues 271–356 (QWLL…LVVQ) and 749–835 (SVLQ…VRKG).

Belongs to the peptidase S1C family.

It localises to the nucleus. Nuclear serine protease which mediates apoptosis. The chain is Pro-apoptotic serine protease NMA111 (NMA111) from Eremothecium gossypii (strain ATCC 10895 / CBS 109.51 / FGSC 9923 / NRRL Y-1056) (Yeast).